A 372-amino-acid polypeptide reads, in one-letter code: Cytochrome b (372 aa).

4 consecutive transmembrane segments (helical) span residues 25-45, 69-90, 105-125, and 170-190; these read FGSM…FLAI, WIMQ…YIHI, WLSG…GYVL, and FFAL…IHIM. Heme b-binding residues include His75 and His89. His174 and His188 together coordinate heme b. His193 contacts a ubiquinone. 4 helical membrane-spanning segments follow: residues 218–238, 280–300, 312–332, and 339–358; these read YKDM…LSFS, LGGT…PFTH, LSQI…WTAS, and FILI…IMAP.

This sequence belongs to the cytochrome b family. The cytochrome bc1 complex contains 3 respiratory subunits (MT-CYB, CYC1 and UQCRFS1), 2 core proteins (UQCRC1 and UQCRC2) and probably 6 low-molecular weight proteins. It depends on heme b as a cofactor.

It is found in the mitochondrion inner membrane. Component of the ubiquinol-cytochrome c reductase complex (complex III or cytochrome b-c1 complex) that is part of the mitochondrial respiratory chain. The b-c1 complex mediates electron transfer from ubiquinol to cytochrome c. Contributes to the generation of a proton gradient across the mitochondrial membrane that is then used for ATP synthesis. The chain is Cytochrome b (MT-CYB) from Hemachatus haemachatus (Rinkhals).